Reading from the N-terminus, the 189-residue chain is Hypoxanthine/guanine phosphoribosyltransferase (189 aa).

It belongs to the purine/pyrimidine phosphoribosyltransferase family. Archaeal HPRT subfamily. As to quaternary structure, homodimer.

Its subcellular location is the cytoplasm. It carries out the reaction IMP + diphosphate = hypoxanthine + 5-phospho-alpha-D-ribose 1-diphosphate. The enzyme catalyses GMP + diphosphate = guanine + 5-phospho-alpha-D-ribose 1-diphosphate. Its pathway is purine metabolism; IMP biosynthesis via salvage pathway; IMP from hypoxanthine: step 1/1. Functionally, catalyzes a salvage reaction resulting in the formation of IMP that is energically less costly than de novo synthesis. The sequence is that of Hypoxanthine/guanine phosphoribosyltransferase (hpt) from Methanosarcina acetivorans (strain ATCC 35395 / DSM 2834 / JCM 12185 / C2A).